A 497-amino-acid chain; its full sequence is Zinc metalloproteinase nas-28 (497 aa).

Residues 1 to 14 (MFFPVVFFIPFVLG) form the signal peptide. Residues 15–120 (APTQKALEKI…IENGNYRSKR (106 aa)) constitute a propeptide that is removed on maturation. Asn-76 carries an N-linked (GlcNAc...) asparagine glycan. Positions 121–319 (QAIVDTTNFW…IGVNKLYNCT (199 aa)) constitute a Peptidase M12A domain. 7 disulfide bridges follow: Cys-164-Cys-318, Cys-185-Cys-206, Cys-328-Cys-339, Cys-331-Cys-342, Cys-344-Cys-353, Cys-364-Cys-398, and Cys-427-Cys-447. Residue His-214 coordinates Zn(2+). The active site involves Glu-215. Zn(2+) is bound by residues His-218 and His-224. Asn-317 carries an N-linked (GlcNAc...) asparagine glycan. In terms of domain architecture, EGF-like spans 324–354 (IQMKCSNCGITDSRNCNQCKCPRYFTGASCD). Residues 364–483 (CNGAVLQATS…LTFSIQYRAV (120 aa)) form the CUB domain. N-linked (GlcNAc...) asparagine glycosylation occurs at Asn-394.

It depends on Zn(2+) as a cofactor.

The protein resides in the secreted. Metalloprotease. This Caenorhabditis elegans protein is Zinc metalloproteinase nas-28 (nas-28).